The following is a 184-amino-acid chain: Protein GrpE (184 aa).

Basic and acidic residues predominate over residues 1 to 17 (MQHEDKTPEQQENKTPE). The interval 1 to 39 (MQHEDKTPEQQENKTPETELQQENAPATPQEAGAAGSID) is disordered. Positions 18-27 (TELQQENAPA) are enriched in polar residues.

The protein belongs to the GrpE family. In terms of assembly, homodimer.

Its subcellular location is the cytoplasm. Participates actively in the response to hyperosmotic and heat shock by preventing the aggregation of stress-denatured proteins, in association with DnaK and GrpE. It is the nucleotide exchange factor for DnaK and may function as a thermosensor. Unfolded proteins bind initially to DnaJ; upon interaction with the DnaJ-bound protein, DnaK hydrolyzes its bound ATP, resulting in the formation of a stable complex. GrpE releases ADP from DnaK; ATP binding to DnaK triggers the release of the substrate protein, thus completing the reaction cycle. Several rounds of ATP-dependent interactions between DnaJ, DnaK and GrpE are required for fully efficient folding. This is Protein GrpE from Methylobacillus flagellatus (strain ATCC 51484 / DSM 6875 / VKM B-1610 / KT).